Reading from the N-terminus, the 302-residue chain is S-crystallin SL4 (302 aa).

Repeat copies occupy residues 45-54 (GGYAVQSRGD), 55-64 (GGYYVKSRGD), and 65-74 (GGYPVQGRGD). Residues 45 to 84 (GGYAVQSRGDGGYYVKSRGDGGYPVQGRGDTGYSSQTRSD) are 4 X approximate tandem repeats of G-G-Y-[AYP]-V-[QK]-[SG]-R-G-D. Short sequence motifs (cell attachment site) lie at residues 52 to 54 (RGD), 62 to 64 (RGD), and 72 to 74 (RGD). A disordered region spans residues 68-92 (PVQGRGDTGYSSQTRSDDACLGQGR). One copy of the 4; approximate repeat lies at 75-84 (TGYSSQTRSD). The short motif at 113–115 (RGD) is the Cell attachment site element. The tract at residues 118–205 (SDINSGLYSG…ESASRRSRNH (88 aa)) is disordered. Composition is skewed to basic and acidic residues over residues 129 to 166 (RMDD…HYRS) and 177 to 192 (AEDR…RIDI). The GST C-terminal domain maps to 183-302 (GHSDSHRIDI…YIKRRYQSDF (120 aa)).

Belongs to the GST superfamily.

In terms of biological role, S-crystallins are structural components of squids and octopi eye lens. The polypeptide is S-crystallin SL4 (Nototodarus sloanii (Wellington flying squid)).